A 243-amino-acid polypeptide reads, in one-letter code: 4-hydroxy-tetrahydrodipicolinate reductase (243 aa).

NAD(+)-binding positions include 9 to 14, 78 to 80, and 104 to 107; these read GANGKM, GTS, and APNF. H134 acts as the Proton donor/acceptor in catalysis. H135 is a (S)-2,3,4,5-tetrahydrodipicolinate binding site. K138 acts as the Proton donor in catalysis. 144–145 is a binding site for (S)-2,3,4,5-tetrahydrodipicolinate; that stretch reads GT.

Belongs to the DapB family.

It localises to the cytoplasm. It carries out the reaction (S)-2,3,4,5-tetrahydrodipicolinate + NAD(+) + H2O = (2S,4S)-4-hydroxy-2,3,4,5-tetrahydrodipicolinate + NADH + H(+). The enzyme catalyses (S)-2,3,4,5-tetrahydrodipicolinate + NADP(+) + H2O = (2S,4S)-4-hydroxy-2,3,4,5-tetrahydrodipicolinate + NADPH + H(+). The protein operates within amino-acid biosynthesis; L-lysine biosynthesis via DAP pathway; (S)-tetrahydrodipicolinate from L-aspartate: step 4/4. In terms of biological role, catalyzes the conversion of 4-hydroxy-tetrahydrodipicolinate (HTPA) to tetrahydrodipicolinate. This is 4-hydroxy-tetrahydrodipicolinate reductase from Legionella pneumophila subsp. pneumophila (strain Philadelphia 1 / ATCC 33152 / DSM 7513).